Here is a 249-residue protein sequence, read N- to C-terminus: Triosephosphate isomerase (249 aa).

Substrate is bound by residues N12 and K14. Residue K14 is modified to N6-acetyllysine. Y68 bears the 3'-nitrotyrosine mark. S80 is modified (phosphoserine). The active-site Electrophile is H96. The residue at position 106 (S106) is a Phosphoserine. Residue K142 forms a Glycyl lysine isopeptide (Lys-Gly) (interchain with G-Cter in SUMO1) linkage. N6-succinyllysine is present on K149. N6-acetyllysine; alternate is present on K156. An N6-succinyllysine; alternate modification is found at K156. A Phosphoserine modification is found at S159. Catalysis depends on E166, which acts as the Proton acceptor. T173 carries the post-translational modification Phosphothreonine. Residue K194 is modified to N6-acetyllysine; alternate. K194 bears the N6-succinyllysine; alternate mark. At K194 the chain carries N6-methyllysine; alternate. Phosphoserine is present on S198. Position 209 is a 3'-nitrotyrosine (Y209). Position 212 is a phosphoserine (S212). T214 bears the Phosphothreonine mark. Phosphoserine is present on S223. K238 bears the N6-acetyllysine mark.

This sequence belongs to the triosephosphate isomerase family. Homodimer.

The protein localises to the cytoplasm. It catalyses the reaction dihydroxyacetone phosphate = methylglyoxal + phosphate. The catalysed reaction is D-glyceraldehyde 3-phosphate = dihydroxyacetone phosphate. The protein operates within carbohydrate degradation; glycolysis; D-glyceraldehyde 3-phosphate from glycerone phosphate: step 1/1. It functions in the pathway carbohydrate biosynthesis; gluconeogenesis. Functionally, triosephosphate isomerase is an extremely efficient metabolic enzyme that catalyzes the interconversion between dihydroxyacetone phosphate (DHAP) and D-glyceraldehyde-3-phosphate (G3P) in glycolysis and gluconeogenesis. It is also responsible for the non-negligible production of methylglyoxal a reactive cytotoxic side-product that modifies and can alter proteins, DNA and lipids. The protein is Triosephosphate isomerase (TPI1) of Canis lupus familiaris (Dog).